The following is a 381-amino-acid chain: Protein palisade (381 aa).

The signal sequence occupies residues 1–25; the sequence is MMMHSRNRSWTLTLLALGVVLATSA. 6 tandem repeats follow at residues 190–199, 200–209, 210–219, 220–229, 230–239, and 247–256. A 6 X 10 AA approximate tandem repeats of P-[AP]-A-P-A-Y-E-[AP]-P-[AT] region spans residues 190–256; the sequence is PAAPAYEAPA…PPAPAYEPPA (67 aa). Disordered regions lie at residues 236–270 and 309–329; these read EAPT…AQPS and TPTA…PSQN. The segment covering 311–321 has biased composition (pro residues); the sequence is TAPPPPPPPAP.

Sulfated by pip; may be involved in embryo dorsal-ventral axis determination. Sulfation by pip may occur on covalently bound glycosaminoglycans. Post-translationally, may undergo both disulfide and non-disulfide cross-linking upon incorporation into the vitelline membrane. Present in the perivitelline space of stage 10 egg chambers and in the vitelline membrane adjacent to the oocyte in stage 13 and 14 egg chambers (at protein level).

It is found in the secreted. The protein localises to the extracellular space. Its subcellular location is the extracellular matrix. Its function is as follows. Minor protein component of the vitelline membrane. Involved in vitelline membrane biogenesis during late stages of oogenesis. Required for efficient disulfide and non-disulfide cross-linking of several vitelline membrane components. The chain is Protein palisade from Drosophila melanogaster (Fruit fly).